We begin with the raw amino-acid sequence, 358 residues long: 3-dehydroquinate synthase (358 aa).

NAD(+)-binding positions include 75 to 80 (SGEGSK), 109 to 113 (GVLGD), 133 to 134 (TT), lysine 146, and lysine 155. Zn(2+) is bound by residues glutamate 188, histidine 245, and histidine 262.

The protein belongs to the sugar phosphate cyclases superfamily. Dehydroquinate synthase family. Co(2+) is required as a cofactor. Zn(2+) serves as cofactor. The cofactor is NAD(+).

The protein localises to the cytoplasm. The enzyme catalyses 7-phospho-2-dehydro-3-deoxy-D-arabino-heptonate = 3-dehydroquinate + phosphate. It participates in metabolic intermediate biosynthesis; chorismate biosynthesis; chorismate from D-erythrose 4-phosphate and phosphoenolpyruvate: step 2/7. In terms of biological role, catalyzes the conversion of 3-deoxy-D-arabino-heptulosonate 7-phosphate (DAHP) to dehydroquinate (DHQ). This is 3-dehydroquinate synthase from Methylacidiphilum infernorum (isolate V4) (Methylokorus infernorum (strain V4)).